Reading from the N-terminus, the 125-residue chain is UPF0102 protein PSPA7_4996 (125 aa).

Belongs to the UPF0102 family.

In Pseudomonas paraeruginosa (strain DSM 24068 / PA7) (Pseudomonas aeruginosa (strain PA7)), this protein is UPF0102 protein PSPA7_4996.